Here is a 793-residue protein sequence, read N- to C-terminus: MQDGNFLLSALQPEAGVCSLALPSDLQLDRRGAEGPEAERLRAARVQEQVRARLLQLGQQPRHNGPAEPDGAAEAARGASRAQYHTLQAGFSSRSQGLGGETSTFRPIAKPTYSPASWSSRSAVDLSSSRRLSSVHNGGGAFGAAGYRGAPPTAPVPARPVSFHERGGAGSRADYDTLSLRSLRLGAGGPDDRYSVVSEQLEPAATSSYRAFAYERRASSSSSRAGGLDWPEATEGPPSRTIRAPAMRTLQRFQSSHRSRGVAAGGPGGVLEPVTRAPSVRSLSLGDSGHLPDMRGLDSYGGHRTLQRLSSGFDDIDLPSAVKYLMASDPNLQVLGAAYIQHKCYSDAAAKKQARSLQAVPRLVKLFNHANQEVQRHATGAMRNLVYDNADNKLALVEENGIFELLRALREQDDELRKNVTGILWNLSSSDHLKDRLARDTLEQLTDLVLSPLSGAGGPPLIQQNASEAEIFYNATGFLRNLSSASQATRQKMRECHGLVDALVTYINHALDVGKCEDKSVENAVCVLRNLSYRLYDEMPPSALQRLEGRGRQDMGVPPGEAVGCFTPQSRRLRELPLTADALTFAEVSKDPKGLEWLWSPQIVGLYNRLLQRCELNRHTTEAAAGALQNITAGDRRWAGVLSRLALEQERILNPLLDRVRTADHHQLRSLTGLIRNLSRNARNKDEMSTKLVSHLIEKLPGSVGEKSPPADVLINIIAVLNNLVVASPVAARDLLYFDGLRKLVFIKKKRDSPDSEKSSRAASSLLANLWQYNKLHRDFRAKGYRKEDFLGP.

The interval 56–82 (QLGQQPRHNGPAEPDGAAEAARGASRA) is disordered. Residues 66 to 82 (PAEPDGAAEAARGASRA) show a composition bias toward low complexity. Residue Arg-81 is modified to Omega-N-methylarginine. Phosphoserine is present on residues Ser-122, Ser-179, and Ser-182. Tyr-194 is subject to Phosphotyrosine. The disordered stretch occupies residues 221–240 (SSSRAGGLDWPEATEGPPSR). Phosphoserine is present on Ser-239. Thr-249 is subject to Phosphothreonine. Arg-260 bears the Omega-N-methylarginine mark. Ser-282, Ser-310, Ser-311, and Ser-328 each carry phosphoserine. The interval 282 to 285 (SLSL) is required for interaction with SFN. The tract at residues 291–720 (LPDMRGLDSY…ADVLINIIAV (430 aa)) is required for interaction with GSK3B. ARM repeat units follow at residues 302–345 (GHRT…HKCY), 348–387 (AAAK…NLVY), 390–429 (ADNK…NLSS), 446–484 (TDLV…NLSS), 488–533 (ATRQ…NLSY), 592–633 (PKGL…NITA), 641–680 (VLSR…NLSR), and 685–726 (KDEM…NLVV). Residues 513 to 793 (VGKCEDKSVE…GYRKEDFLGP (281 aa)) are required for binding to PKP2 mRNA.

The protein belongs to the beta-catenin family. Found in a complex composed of CDH1, RAP1A and PKP3; PKP3 acts as a scaffold protein within the complex, the complex is required for CDH1 localization to mature desmosome cell junctions. Interacts with FXR1; the interaction facilitates the binding of PKP3 to PKP2 mRNA. Interacts (via ARM repeats) with GSK3B; the interaction may be involved in PKP3 protein degradation. Interacts with hyperphosphorylated and hypophosphorylated RB1; the interaction inhibits RB1 interaction with and repression of the transcription factor E2F1, potentially via sequestering RB1 to the cytoplasm. Interacts with CDKN1A; the interaction sequesters CDKN1A to the cytoplasm thereby repressing its role as an inhibitor of CDK4- and CDK6-driven RB1 phosphorylation. Interacts (via N-terminus) with SFN; the interaction maintains the cytoplasmic pool of PKP3, facilitates PKP3 exchange at desmosomes and restricts PKP3 localization to existing desmosome cell junctions. Interacts (via N-terminus) with SFN; the interaction maintains the cytoplasmic pool of PKP3 and restricts PKP3 localization to existing desmosome cell junctions. Interacts (via N-terminus) with JUP; the interaction is required for PKP3 localization to desmosome cell-cell junctions. Post-translationally, phosphorylated at Ser-282 when localized to the cytoplasm, PKP3 at desmosome cell junctions is not phosphorylated. Phosphorylation at Try-194 by SRC is induced by reactive oxygen species and potentially acts as a release mechanism from desmosome cell-cell junctions.

Its subcellular location is the nucleus. The protein resides in the cell junction. It is found in the desmosome. It localises to the cytoplasm. The protein localises to the cell membrane. Its subcellular location is the adherens junction. In terms of biological role, a component of desmosome cell-cell junctions which are required for positive regulation of cellular adhesion. Required for the localization of DSG2, DSP and PKP2 to mature desmosome junctions. May also play a role in the maintenance of DSG3 protein abundance in keratinocytes. Required for the formation of DSP-containing desmosome precursors in the cytoplasm during desmosome assembly. Also regulates the accumulation of CDH1 to mature desmosome junctions, via cAMP-dependent signaling and its interaction with activated RAP1A. Positively regulates the stabilization of PKP2 mRNA and therefore protein abundance, via its interaction with FXR1, may also regulate the protein abundance of DSP via the same mechanism. May also regulate the protein abundance of the desmosome component PKP1. Required for the organization of desmosome junctions at intercellular borders between basal keratinocytes of the epidermis, as a result plays a role in maintenance of the dermal barrier and regulation of the dermal inflammatory response. Required during epidermal keratinocyte differentiation for cell adherence at tricellular cell-cell contacts, via regulation of the timely formation of adherens junctions and desmosomes in a calcium-dependent manner, and may also play a role in the organization of the intracellular actin fiber belt. Acts as a negative regulator of the inflammatory response in hematopoietic cells of the skin and intestine, via modulation of proinflammatory cytokine production. Important for epithelial barrier maintenance in the intestine to reduce intestinal permeability, thereby plays a role in protection from intestinal-derived endotoxemia. Required for the development of hair follicles, via a role in the regulation of inner root sheaf length, correct alignment and anterior-posterior polarity of hair follicles. Promotes proliferation and cell-cycle G1/S phase transition of keratinocytes. Promotes E2F1-driven transcription of G1/S phase promoting genes by acting to release E2F1 from its inhibitory interaction with RB1, via sequestering RB1 and CDKN1A to the cytoplasm and thereby increasing CDK4- and CDK6-driven phosphorylation of RB1. May act as a scaffold protein to facilitate MAPK phosphorylation of RPS6KA protein family members and subsequently promote downstream EGFR signaling. May play a role in the positive regulation of transcription of Wnt-mediated TCF-responsive target genes. In Bos taurus (Bovine), this protein is Plakophilin-3 (PKP3).